Reading from the N-terminus, the 227-residue chain is Class I hydrophobin A (227 aa).

An N-terminal signal peptide occupies residues 1-18 (MQFSLSAIVLGLAATVYA). Asparagine 50 carries N-linked (GlcNAc...) asparagine glycosylation. 3 disulfides stabilise this stretch: cysteine 60–cysteine 138, cysteine 68–cysteine 132, and cysteine 69–cysteine 109.

Belongs to the fungal hydrophobin family.

It localises to the secreted. The protein localises to the cell wall. Functionally, aerial growth, conidiation, and dispersal of filamentous fungi in the environment rely upon a capability of their secreting small amphipathic proteins called hydrophobins (HPBs) with low sequence identity. Class I can self-assemble into an outermost layer of rodlet bundles on aerial cell surfaces, conferring cellular hydrophobicity that supports fungal growth, development and dispersal; whereas Class II form highly ordered films at water-air interfaces through intermolecular interactions but contribute nothing to the rodlet structure. In P.expansum, hydrophobins contribute to germination, tolerance to cold stress and mycotoxins patulin and citrinin production. HfbA and HfbB are essential for fungal surface hydrophobicity and HfbA mediates air and water dispersal. This Penicillium expansum (Blue mold rot fungus) protein is Class I hydrophobin A.